The sequence spans 40 residues: Conotoxin Bt14.16 (40 aa).

A propeptide spanning residues 1–18 is cleaved from the precursor; that stretch reads SDGRDAAVIYTESDVIAR. Disulfide bonds link Cys21–Cys36 and Cys24–Cys29.

The protein belongs to the conotoxin A superfamily. Expressed by the venom duct.

It localises to the secreted. Functionally, probable neurotoxin with unknown target. Possibly targets ion channels. The protein is Conotoxin Bt14.16 of Conus betulinus (Beech cone).